Here is a 142-residue protein sequence, read N- to C-terminus: Phosphoribosyl-AMP cyclohydrolase (142 aa).

D85 lines the Mg(2+) pocket. Residue C86 coordinates Zn(2+). Residues D87 and D89 each contribute to the Mg(2+) site. Positions 102 and 109 each coordinate Zn(2+). Residues 120–142 (GEPPTPVGAGERQPASGTADAAP) are disordered.

It belongs to the PRA-CH family. Homodimer. Mg(2+) serves as cofactor. The cofactor is Zn(2+).

The protein resides in the cytoplasm. The enzyme catalyses 1-(5-phospho-beta-D-ribosyl)-5'-AMP + H2O = 1-(5-phospho-beta-D-ribosyl)-5-[(5-phospho-beta-D-ribosylamino)methylideneamino]imidazole-4-carboxamide. It functions in the pathway amino-acid biosynthesis; L-histidine biosynthesis; L-histidine from 5-phospho-alpha-D-ribose 1-diphosphate: step 3/9. Functionally, catalyzes the hydrolysis of the adenine ring of phosphoribosyl-AMP. This is Phosphoribosyl-AMP cyclohydrolase from Acidothermus cellulolyticus (strain ATCC 43068 / DSM 8971 / 11B).